A 354-amino-acid chain; its full sequence is Protein RecA (354 aa).

Residue 67-74 (GPESSGKT) participates in ATP binding.

Belongs to the RecA family.

It is found in the cytoplasm. In terms of biological role, can catalyze the hydrolysis of ATP in the presence of single-stranded DNA, the ATP-dependent uptake of single-stranded DNA by duplex DNA, and the ATP-dependent hybridization of homologous single-stranded DNAs. It interacts with LexA causing its activation and leading to its autocatalytic cleavage. In Enterobacter agglomerans (Erwinia herbicola), this protein is Protein RecA.